A 1176-amino-acid chain; its full sequence is MLEGRILADFRQTDASLHQGRPQSSSNSSVPGAPNRVSFAKLREPLEVPGLLDVQTDSFEWLIGSQRWRESAAQRGDATPVGGLEEVLYELSPIEDFSGSMSLSFSDPRFDEVKAPVDECKDKDMTYAAPLFVTAEFINNNTGEIKSQTVFMGGFPMMTEKGTFIINGTERVVVSQLVRSPGVYFDETIDKSTDKLLHSVKVIPSRGAWLEFDVDKRDTVGVRIDRKRRQPVTVLLKALGWSNEQIHERFGFSEIMMGTLEKDNTAGTDEALLDIYRKLRPGEPPTKESAQTLLENLFFKEKRYDLARVGRYKVNKKLGLNAGQPITSSTLTEEDVVATIEYLVRLHEGQTAMTAPGGVEVPVETDDIDHFGNRRLRTVGELIQNQIRVGMSRMERVVRERMTTQDVEAITPQTLINIRPVVAAIKEFFGTSQLSQFMDQNNPLSGLTHKRRLSALGPGGLSRERAGLEVRDVHPSHYGRMCPIETPEGPNIGLIGSLSVYARVNPFGFIETPYRKVVDGVVSDEIHYLTADEEDRHVVAQANSPIDAQGRFVEPRVLVRRKAGEVEYVPSSEVDYMDVSPRQMVSVATAMIPFLEHDDANRALMGANMQRQAVPLVRSEAPLVGTGMELRAAIDAGDVVVADKAGVIEEVSADYITVMADDGTRHTYRMRKFARSNHGTCANQSPIVDAGERVEAGQVIADGPCTQNGEMALGKNLLVAIMPWEGHNYEDAIILSNRLVEEDVLTSIHIEEHEIDARDTKLGAEEITRDIPNVSDEVLADLDERGIVRIGAEVRDGDILVGKVTPKGETELTPEERLLRAIFGEKAREVRDTSLKVPHGESGKVIGIRVFSREDDDELPAGVNELVRVYVAQKRKISDGDKLAGRHGNKGVIGKILPAEDMPFLPDGTPVDIILNTHGVPRRMNIGQILETHLGWVAKSGWNIDVANGVPEWAGKLPENLLSAQPDSIVSTPVFDGAQEAELQGLLSATLPNRDGEVLVDGDGKAKLFDGRSGEPFPYPVTVGYMYIMKLHHLVDDKIHARSTGPYSMITQQPLGGKAQFGGQRFGEMECWAMQAYGAAYTLQELLTIKSDDTVGRVKVYEAIVKGENIPEPGIPESFKVLLKELQSLCLNVEVLSSDGAAIELREGEDEDLERAAANLGINLSRNESASVEDLA.

Over residues 13-30 (TDASLHQGRPQSSSNSSV) the composition is skewed to polar residues. The disordered stretch occupies residues 13–35 (TDASLHQGRPQSSSNSSVPGAPN).

The protein belongs to the RNA polymerase beta chain family. In terms of assembly, the RNAP catalytic core consists of 2 alpha, 1 beta, 1 beta' and 1 omega subunit. When a sigma factor is associated with the core the holoenzyme is formed, which can initiate transcription.

It catalyses the reaction RNA(n) + a ribonucleoside 5'-triphosphate = RNA(n+1) + diphosphate. Functionally, DNA-dependent RNA polymerase catalyzes the transcription of DNA into RNA using the four ribonucleoside triphosphates as substrates. The polypeptide is DNA-directed RNA polymerase subunit beta (Mycobacterium ulcerans (strain Agy99)).